The primary structure comprises 249 residues: Derlin-2.2 (249 aa).

Residues 1 to 21 (MAQAVEEWYRQMPIITRSYLT) lie on the Cytoplasmic side of the membrane. A helical membrane pass occupies residues 22–42 (AAVVTTVGCTLEIISPYHLYL). Over 43-96 (NPKLVVQHYEIWRLVTNFLYFRKMDLDFLFHMFFLARYCKLLEENSFRGRTADF) the chain is Lumenal. A helical membrane pass occupies residues 97-117 (FYMLLFGATVLTGIVLIGGMI). Residues 118–122 (PYISE) are Cytoplasmic-facing. Residues 123–143 (TFARILFLSNSLTFMMVYVWS) form a helical membrane-spanning segment. Residues 144-152 (KHNPFIHMS) are Lumenal-facing. Residues 153–173 (FLGLFTFTAAYLPWVLLGFSI) form a helical membrane-spanning segment. At 174 to 249 (LVGSSTWVDL…GAIGVDPQAQ (76 aa)) the chain is on the cytoplasmic side.

This sequence belongs to the derlin family. In terms of tissue distribution, expressed in roots, stalks, leaves, immature ears, embryo and endosperm.

Its subcellular location is the endoplasmic reticulum membrane. In terms of biological role, may be involved in the degradation process of specific misfolded endoplasmic reticulum (ER) luminal proteins. In Zea mays (Maize), this protein is Derlin-2.2 (DER2.2).